Consider the following 697-residue polypeptide: Zinc finger protein 12 (697 aa).

Lys-3 is covalently cross-linked (Glycyl lysine isopeptide (Lys-Gly) (interchain with G-Cter in SUMO2)). A KRAB domain is found at 8-79 (VSFKDVAVDF…EGEFLLQSYP (72 aa)). Glycyl lysine isopeptide (Lys-Gly) (interchain with G-Cter in SUMO2) cross-links involve residues Lys-98, Lys-179, Lys-182, Lys-209, Lys-215, Lys-224, Lys-239, and Lys-267. 2 C2H2-type zinc fingers span residues 269-291 (YECS…QRTH) and 297-319 (YECN…QRTH). Residues Lys-309, Lys-323, Lys-337, and Lys-365 each participate in a glycyl lysine isopeptide (Lys-Gly) (interchain with G-Cter in SUMO2) cross-link. 8 consecutive C2H2-type zinc fingers follow at residues 325–347 (YECN…QRTH), 353–375 (YECS…QRTH), 381–403 (YVCH…QKIH), 409–431 (YKCS…LRTH), 437–459 (YECN…YRTH), 465–487 (YECN…QRVH), 493–515 (YECN…HRTH), and 521–543 (YECS…RRIH). Residues Lys-544 and Lys-547 each participate in a glycyl lysine isopeptide (Lys-Gly) (interchain with G-Cter in SUMO2) cross-link. 5 consecutive C2H2-type zinc fingers follow at residues 549-571 (YECY…HRIH), 577-599 (YECS…QRTH), 605-627 (YECY…HRIH), 633-655 (FECN…YRTH), and 661-683 (YECT…QRIH).

The protein belongs to the krueppel C2H2-type zinc-finger protein family. In terms of tissue distribution, widely expressed in various adult tissues and embryonic developmental stages (isoform 3).

The protein resides in the nucleus. Transcriptional repressor which suppresses activation protein 1 (AP-1)- and serum response element (SRE)-mediated transcriptional activity. This is Zinc finger protein 12 (ZNF12) from Homo sapiens (Human).